Consider the following 130-residue polypeptide: Ion transport peptide (130 aa).

3 disulfides stabilise this stretch: cysteine 62-cysteine 98, cysteine 78-cysteine 94, and cysteine 81-cysteine 107. Leucine 127 is modified (leucine amide).

Belongs to the arthropod CHH/MIH/GIH/VIH hormone family. Brain and corpus cardiacum.

It localises to the secreted. Its function is as follows. Stimulates salt and water reabsorption and inhibits acid secretion in the ileum of S.gregaria. The protein is Ion transport peptide of Schistocerca gregaria (Desert locust).